Reading from the N-terminus, the 204-residue chain is UPF0056 membrane protein TC_0241 (204 aa).

Transmembrane regions (helical) follow at residues 8-28 (LTLL…FVAL), 46-66 (IFAL…FRLL), 68-88 (VSLP…AINM), 107-127 (IFYP…STLG), 138-158 (LVLG…FFSS), and 176-196 (FGIS…STAF).

The protein belongs to the UPF0056 (MarC) family.

Its subcellular location is the cell membrane. In Chlamydia muridarum (strain MoPn / Nigg), this protein is UPF0056 membrane protein TC_0241.